The chain runs to 306 residues: Aspartate carbamoyltransferase catalytic subunit (306 aa).

Carbamoyl phosphate-binding residues include R55 and T56. Position 84 (K84) interacts with L-aspartate. Carbamoyl phosphate-binding residues include R105, H133, and Q136. L-aspartate-binding residues include R166 and R227. Residues L265 and P266 each coordinate carbamoyl phosphate.

This sequence belongs to the aspartate/ornithine carbamoyltransferase superfamily. ATCase family. In terms of assembly, heterododecamer (2C3:3R2) of six catalytic PyrB chains organized as two trimers (C3), and six regulatory PyrI chains organized as three dimers (R2).

The catalysed reaction is carbamoyl phosphate + L-aspartate = N-carbamoyl-L-aspartate + phosphate + H(+). It participates in pyrimidine metabolism; UMP biosynthesis via de novo pathway; (S)-dihydroorotate from bicarbonate: step 2/3. Catalyzes the condensation of carbamoyl phosphate and aspartate to form carbamoyl aspartate and inorganic phosphate, the committed step in the de novo pyrimidine nucleotide biosynthesis pathway. The chain is Aspartate carbamoyltransferase catalytic subunit from Neisseria meningitidis serogroup C / serotype 2a (strain ATCC 700532 / DSM 15464 / FAM18).